The primary structure comprises 753 residues: Rsm22-cox11 tandem protein 1, mitochondrial (753 aa).

A mitochondrion-targeting transit peptide spans 1-39 (MPILTCRYKILFLYNLRNCFTFQNQRCLIPYGTTTTIRW). Positions 323, 329, 342, and 430 each coordinate [4Fe-4S] cluster. The helical transmembrane segment at 571–591 (IYYLVAISIFALGLTYAAVPL) threads the bilayer. At 592 to 753 (YRLFCSKTGY…TNGNLLTKLN (162 aa)) the chain is on the mitochondrial intermembrane side.

In the N-terminal section; belongs to the methyltransferase superfamily. Rsm22 family. The protein in the C-terminal section; belongs to the COX11/CtaG family. In terms of assembly, associates with the mitochondrial ribosome (mitoribosome). Only transiently interacts with the mitoribosome. In terms of processing, specific enzymatic cleavages in vivo by mitochondrial processing peptidase (MPP) yield mature proteins including rsm22-1 and cox11-1.

The protein localises to the mitochondrion. It localises to the mitochondrion inner membrane. Functionally, mitochondrial ribosome (mitoribosome) assembly factor. Binds at the interface of the head and body domains of the mitochondrial small ribosomal subunit (mt-SSU), occluding the mRNA channel and preventing compaction of the head domain towards the body. Probable inactive methyltransferase: retains the characteristic folding and ability to bind S-adenosyl-L-methionine, but it probably lost its methyltransferase activity. Exerts its effect at some terminal stage of cytochrome c oxidase synthesis, probably by being involved in the insertion of the copper B into subunit I. The chain is Rsm22-cox11 tandem protein 1, mitochondrial (cox1101) from Schizosaccharomyces pombe (strain 972 / ATCC 24843) (Fission yeast).